The primary structure comprises 233 residues: Movement and silencing protein TGBp1 (233 aa).

In terms of domain architecture, (+)RNA virus helicase ATP-binding spans 1-133 (MNHFINLLVA…CKLLSSLGIK (133 aa)). The (+)RNA virus helicase C-terminal domain occupies 134–233 (VESHRRDRDV…EFPHTTSRPQ (100 aa)).

Belongs to the Tymovirales TGBp1 protein family. In terms of assembly, homodimer and homooligomer. Interacts with capsid protein. Interacts with host AGO1; this interaction targets the host protein for degradation, thereby suppressing the antiviral RNA silencing.

It localises to the host cytoplasm. Transports viral genome to neighboring plant cells directly through plasmosdesmata, without any budding. The movement protein allows efficient cell to cell propagation, by bypassing the host cell wall barrier. Increases plasmodesma size exclusion limit. Acts as a suppressor of RNA-mediated gene silencing, also known as post-transcriptional gene silencing (PTGS), a mechanism of plant viral defense that limits the accumulation of viral RNAs. This Carica papaya (Papaya) protein is Movement and silencing protein TGBp1.